A 181-amino-acid chain; its full sequence is RNA pyrophosphohydrolase (181 aa).

One can recognise a Nudix hydrolase domain in the interval 6 to 148 (GFRPNVGIIV…KRQVYRQALQ (143 aa)). The Nudix box motif lies at 38-59 (GGVEANETPLEALYRELREEVG).

The protein belongs to the Nudix hydrolase family. RppH subfamily. A divalent metal cation serves as cofactor.

Its function is as follows. Accelerates the degradation of transcripts by removing pyrophosphate from the 5'-end of triphosphorylated RNA, leading to a more labile monophosphorylated state that can stimulate subsequent ribonuclease cleavage. This is RNA pyrophosphohydrolase from Halorhodospira halophila (strain DSM 244 / SL1) (Ectothiorhodospira halophila (strain DSM 244 / SL1)).